We begin with the raw amino-acid sequence, 311 residues long: Solute carrier family 25 member 48 (311 aa).

Solcar repeat units follow at residues 3-86 (NFQL…TQRF), 100-205 (PHVL…LSDW), and 214-301 (PSPC…SLQA). 6 helical membrane-spanning segments follow: residues 9–29 (FVAG…LDTV), 61–81 (GMSF…GVFS), 107–127 (LLAS…VDLI), 193–213 (CLYF…ACAG), 217–237 (CAVW…ATPM), and 277–295 (ITVN…FLGY).

This sequence belongs to the mitochondrial carrier (TC 2.A.29) family.

The protein resides in the mitochondrion inner membrane. The polypeptide is Solute carrier family 25 member 48 (SLC25A48) (Bos taurus (Bovine)).